The following is a 360-amino-acid chain: UDP-N-acetylglucosamine--N-acetylmuramyl-(pentapeptide) pyrophosphoryl-undecaprenol N-acetylglucosamine transferase (360 aa).

UDP-N-acetyl-alpha-D-glucosamine contacts are provided by residues 11–13 (TGG), N117, R160, S192, and Q294.

The protein belongs to the glycosyltransferase 28 family. MurG subfamily.

Its subcellular location is the cell inner membrane. The catalysed reaction is di-trans,octa-cis-undecaprenyl diphospho-N-acetyl-alpha-D-muramoyl-L-alanyl-D-glutamyl-meso-2,6-diaminopimeloyl-D-alanyl-D-alanine + UDP-N-acetyl-alpha-D-glucosamine = di-trans,octa-cis-undecaprenyl diphospho-[N-acetyl-alpha-D-glucosaminyl-(1-&gt;4)]-N-acetyl-alpha-D-muramoyl-L-alanyl-D-glutamyl-meso-2,6-diaminopimeloyl-D-alanyl-D-alanine + UDP + H(+). It participates in cell wall biogenesis; peptidoglycan biosynthesis. Its function is as follows. Cell wall formation. Catalyzes the transfer of a GlcNAc subunit on undecaprenyl-pyrophosphoryl-MurNAc-pentapeptide (lipid intermediate I) to form undecaprenyl-pyrophosphoryl-MurNAc-(pentapeptide)GlcNAc (lipid intermediate II). In Rickettsia felis (strain ATCC VR-1525 / URRWXCal2) (Rickettsia azadi), this protein is UDP-N-acetylglucosamine--N-acetylmuramyl-(pentapeptide) pyrophosphoryl-undecaprenol N-acetylglucosamine transferase.